A 162-amino-acid polypeptide reads, in one-letter code: MSVVFRTVEDPELKSICTTFTSSISAEFDSNTLVCDLVETDLFTEEGTSQIFTFKKNVLILPANVPEGIELRILEENVSLPLKEFEPIKVPAGAHCFLSWEKVPLRKRIKIISSSQPDDNDEESTWPGVFIKFGVENSSSAEFGEPLKSQIEIPDDQKLIVQ.

It is found in the cytoplasm. The protein localises to the nucleus. This is an uncharacterized protein from Schizosaccharomyces pombe (strain 972 / ATCC 24843) (Fission yeast).